The sequence spans 285 residues: MKVRCVSLVAAGLLTIAGSAIGQPAPAPMPAMAPAAKPAMNTPVDRAKILSAPGVFVAFSTYKIRPDYFKVALAERKGAADEVMAVLEKHKEKVIVDAYLTRGYEAKSDYFLRVHAYDAVAAQAFLVDFRATRFGMYSDVTESLVGITKALNYISKDKSPDLNKGLSGATYAGDAPRFAFMIPVKKNADWWNLTDEQRLKEMETHTLPTLPFLVNVKRKLYHSTGLDDTDFITYFETNDLGAFNNLMLSLAKVPENKYHVRWGNPTVLGTIQPIENLVKTLSMGN.

An N-terminal signal peptide occupies residues Met1 to Pro38. Glu105 provides a ligand contact to Ca(2+). Residue His205 participates in heme binding. The active-site Proton acceptor is Arg218. Ca(2+) is bound by residues Asp227 and Thr266.

It belongs to the chlorite dismutase family. In terms of assembly, homopentamer. Heme b serves as cofactor.

It is found in the periplasm. It catalyses the reaction chloride + O2 = chlorite. In terms of biological role, catalyzes the heme-dependent decomposition of chlorite to O(2) and chloride with high efficiency and specificity. Used to detoxify chlorite, a by-product of the reduction of perchlorate, a primarily anthropogenic pollutant, in perchlorate-respiring bacteria. The protein is Chlorite dismutase (cld) of Ideonella dechloratans.